The sequence spans 87 residues: Tektin-2 (87 aa).

Residues 26–55 adopt a coiled-coil conformation; it reads VEEELLKEVEVIEATKKALQQRVSQAFQQL.

The protein belongs to the tektin family. In terms of assembly, microtubule inner protein component of sperm flagellar doublet microtubules. May interact with CCDC172. In terms of processing, tyrosine phosphorylated. Post-translationally, ubiquitinated, leading to its degradation. Deubiquitinated by USP16, promoting its stability. As to expression, detected in sperm flagella (at protein level).

Its subcellular location is the cytoplasm. It is found in the cytoskeleton. It localises to the cilium axoneme. The protein resides in the flagellum axoneme. The protein localises to the microtubule organizing center. In terms of biological role, microtubule inner protein (MIP) part of the dynein-decorated doublet microtubules (DMTs) in cilia and flagellar axoneme. Plays a key role in the assembly or attachment of the inner dynein arm to microtubules in sperm flagella and tracheal cilia. Forms filamentous polymers in the walls of ciliary and flagellar microtubules. In Mesocricetus auratus (Golden hamster), this protein is Tektin-2.